A 134-amino-acid polypeptide reads, in one-letter code: U-scoloptoxin(05)-Er2a (134 aa).

A signal peptide spans 1-19 (MTFVVAAVVLLTVVPLATP).

This sequence belongs to the scoloptoxin-05 family. Contains 5 disulfide bonds. In terms of tissue distribution, expressed by the venom gland.

Its subcellular location is the secreted. This is U-scoloptoxin(05)-Er2a from Ethmostigmus rubripes (Giant centipede).